The primary structure comprises 318 residues: Ubiquitin-conjugating enzyme E2 J1 (318 aa).

Over 1–282 (METRYNLKSP…QGQPPRAHHT (282 aa)) the chain is Cytoplasmic. The region spanning 10 to 168 (PAVKRLMKEA…VLLPLKSGSG (159 aa)) is the UBC core domain. Cysteine 91 acts as the Glycyl thioester intermediate in catalysis. Position 184 is a phosphoserine (serine 184). Polar residues predominate over residues 215-233 (PTTFQGATASTSYGAQNPS). The tract at residues 215-283 (PTTFQGATAS…GQPPRAHHTE (69 aa)) is disordered. Residues 249–269 (SMSPRQRRAQQQSQRRPSTSP) show a composition bias toward low complexity. 2 positions are modified to phosphoserine: serine 266 and serine 268. A helical; Anchor for type IV membrane protein transmembrane segment spans residues 283–303 (EHGGSAMLIIILTLALAALIF). Topologically, residues 304-318 (RRIYLANEYIFDFEL) are lumenal.

It belongs to the ubiquitin-conjugating enzyme family. As to quaternary structure, component of the HRD1 complex, which comprises at least SYNV1/HRD1, DERL1/2, FAM8A1, HERPUD1/HERP, OS9, SEL1L and UBE2J1. Interacts with E3 ligase RNF26. Interacts with E3 ligase RNF133. In terms of processing, phosphorylated at Ser-184 in a cytosolic stress-dependent manner by MAP kinase p38 MAPKAPK2. Post-translationally, phosphorylated UBE2J1 is rapidly ubiquitinated and subsequently degraded by the proteasome.

Its subcellular location is the endoplasmic reticulum membrane. It carries out the reaction S-ubiquitinyl-[E1 ubiquitin-activating enzyme]-L-cysteine + [E2 ubiquitin-conjugating enzyme]-L-cysteine = [E1 ubiquitin-activating enzyme]-L-cysteine + S-ubiquitinyl-[E2 ubiquitin-conjugating enzyme]-L-cysteine.. It functions in the pathway protein modification; protein ubiquitination. In terms of biological role, catalyzes the covalent attachment of ubiquitin to other proteins. Functions in the selective degradation of misfolded membrane proteins from the endoplasmic reticulum (ERAD) and is essential for cells to recover from ER stress. Plays a role in MAPKAPK2-dependent translational control of TNF-alpha synthesis. Also acts as a platform for perinuclear positioning of the endosomal system by mediating ubiquitination of SQSTM1 through interaction with the E3 ubiquitin-protein ligase RNF26. Plays a role in male fecundity through the interaction with the E3 ubiquitin-protein ligase RNF133. This is Ubiquitin-conjugating enzyme E2 J1 (Ube2j1) from Mus musculus (Mouse).